The primary structure comprises 209 residues: Thiamine-phosphate synthase (209 aa).

Residues 36-40 and Asn-68 each bind 4-amino-2-methyl-5-(diphosphooxymethyl)pyrimidine; that span reads QYRDK. The Mg(2+) site is built by Asp-69 and Asp-87. Thr-106 contributes to the 4-amino-2-methyl-5-(diphosphooxymethyl)pyrimidine binding site. Residue 133–135 participates in 2-[(2R,5Z)-2-carboxy-4-methylthiazol-5(2H)-ylidene]ethyl phosphate binding; sequence SST. Lys-136 is a binding site for 4-amino-2-methyl-5-(diphosphooxymethyl)pyrimidine. Gly-163 lines the 2-[(2R,5Z)-2-carboxy-4-methylthiazol-5(2H)-ylidene]ethyl phosphate pocket.

This sequence belongs to the thiamine-phosphate synthase family. Requires Mg(2+) as cofactor.

It catalyses the reaction 2-[(2R,5Z)-2-carboxy-4-methylthiazol-5(2H)-ylidene]ethyl phosphate + 4-amino-2-methyl-5-(diphosphooxymethyl)pyrimidine + 2 H(+) = thiamine phosphate + CO2 + diphosphate. The catalysed reaction is 2-(2-carboxy-4-methylthiazol-5-yl)ethyl phosphate + 4-amino-2-methyl-5-(diphosphooxymethyl)pyrimidine + 2 H(+) = thiamine phosphate + CO2 + diphosphate. It carries out the reaction 4-methyl-5-(2-phosphooxyethyl)-thiazole + 4-amino-2-methyl-5-(diphosphooxymethyl)pyrimidine + H(+) = thiamine phosphate + diphosphate. Its pathway is cofactor biosynthesis; thiamine diphosphate biosynthesis; thiamine phosphate from 4-amino-2-methyl-5-diphosphomethylpyrimidine and 4-methyl-5-(2-phosphoethyl)-thiazole: step 1/1. Its function is as follows. Condenses 4-methyl-5-(beta-hydroxyethyl)thiazole monophosphate (THZ-P) and 2-methyl-4-amino-5-hydroxymethyl pyrimidine pyrophosphate (HMP-PP) to form thiamine monophosphate (TMP). This Azotobacter vinelandii (strain DJ / ATCC BAA-1303) protein is Thiamine-phosphate synthase.